The sequence spans 151 residues: U1 small nuclear ribonucleoprotein C (151 aa).

A Matrin-type zinc finger spans residues 4–36 (FYCEYCSIYLTHSSPAGRKQHSQGRKHISAKVE).

Belongs to the U1 small nuclear ribonucleoprotein C family. In terms of assembly, U1 snRNP is composed of the 7 core Sm proteins B/B', D1, D2, D3, E, F and G that assemble in a heptameric protein ring on the Sm site of the small nuclear RNA to form the core snRNP, and at least 3 U1 snRNP-specific proteins U1-70K, U1-A and U1-C. U1-C interacts with U1 snRNA and the 5' splice-site region of the pre-mRNA.

It localises to the nucleus. In terms of biological role, component of the spliceosomal U1 snRNP, which is essential for recognition of the pre-mRNA 5' splice-site and the subsequent assembly of the spliceosome. U1-C is directly involved in initial 5' splice-site recognition for both constitutive and regulated alternative splicing. The interaction with the 5' splice-site seems to precede base-pairing between the pre-mRNA and the U1 snRNA. Stimulates commitment or early (E) complex formation by stabilizing the base pairing of the 5' end of the U1 snRNA and the 5' splice-site region. This is U1 small nuclear ribonucleoprotein C from Theileria annulata.